A 405-amino-acid chain; its full sequence is 3-isopropylmalate dehydrogenase (405 aa).

Position 86–104 (86–104 (GAANTVWTTPDGRTDVRPE)) interacts with NAD(+). 4 residues coordinate substrate: arginine 111, arginine 121, arginine 148, and aspartate 237. Mg(2+) contacts are provided by aspartate 237, aspartate 262, and aspartate 266. Residue 301 to 312 (GSAPDLGKQKVN) coordinates NAD(+). A disordered region spans residues 352-371 (ADIGGSSSTSEVGDLLPTRS).

Belongs to the isocitrate and isopropylmalate dehydrogenases family. In terms of assembly, homodimer. It depends on Mg(2+) as a cofactor. The cofactor is Mn(2+).

The protein localises to the cytoplasm. The catalysed reaction is (2R,3S)-3-isopropylmalate + NAD(+) = 4-methyl-2-oxopentanoate + CO2 + NADH. The protein operates within amino-acid biosynthesis; L-leucine biosynthesis; L-leucine from 3-methyl-2-oxobutanoate: step 3/4. Catalyzes the oxidation of 3-carboxy-2-hydroxy-4-methylpentanoate (3-isopropylmalate) to 3-carboxy-4-methyl-2-oxopentanoate. The product decarboxylates to 4-methyl-2 oxopentanoate. The polypeptide is 3-isopropylmalate dehydrogenase (LEU2) (Yarrowia lipolytica (strain CLIB 122 / E 150) (Yeast)).